A 651-amino-acid chain; its full sequence is Bromodomain-containing protein 7 (651 aa).

K21 participates in a covalent cross-link: Glycyl lysine isopeptide (Lys-Gly) (interchain with G-Cter in SUMO2). Residues 34 to 103 are disordered; the sequence is VTELSTGSSG…RDRAENEVDR (70 aa). The segment covering 35 to 45 has biased composition (polar residues); sequence TELSTGSSGHD. Residues 47–57 are compositionally biased toward basic and acidic residues; it reads SLFEDRSDHDK. The span at 58 to 69 shows a compositional bias: basic residues; sequence HKDRKRKKRKKG. The Nuclear localization signal motif lies at 65-96; sequence KRKKGEKQAPGEEKGRKRRRVKEDKKKRDRDR. A compositionally biased stretch (basic and acidic residues) spans 70–103; sequence EKQAPGEEKGRKRRRVKEDKKKRDRDRAENEVDR. Residues K127, K186, K197, K201, K212, and K241 each participate in a glycyl lysine isopeptide (Lys-Gly) (interchain with G-Cter in SUMO2) cross-link. Positions 131–235 constitute a Bromo domain; the sequence is VEQTPLQEAL…HSGMKILSQE (105 aa). The segment at 252–316 is disordered; that stretch reads KTRKQKERTD…RSSNSEREHE (65 aa). A phosphoserine mark is found at S279 and S289. Basic and acidic residues predominate over residues 290-316; the sequence is PAKDNKRKDKDVLEDKWRSSNSEREHE. A Glycyl lysine isopeptide (Lys-Gly) (interchain with G-Cter in SUMO2) cross-link involves residue K305. K328 bears the N6-acetyllysine mark. Residue K344 forms a Glycyl lysine isopeptide (Lys-Gly) (interchain with G-Cter in SUMO2) linkage. A Phosphoserine modification is found at S380. K389 is covalently cross-linked (Glycyl lysine isopeptide (Lys-Gly) (interchain with G-Cter in SUMO2)). Phosphoserine is present on residues S475, S482, and S483. Residues 536–567 are a coiled coil; it reads SEEAEVFQRKLDETTRLLRELQEAQNERLSTR. Phosphoserine is present on S621.

Interacts with IRF2 and HNRPUL1. Interacts (via N-terminus) with TP53. Interacts (via C-terminus) with EP300. Interacts with BRCA1. Interacts (via bromo domain) with histone H3 (via N-terminus) acetylated at 'Lys-14' (H3K14ac). Has low affinity for histone H3 acetylated at 'Lys-9' (H3K9ac). Has the highest affinity for histone H3 that is acetylated both at 'Lys-9' (H3K9ac) and at 'Lys-14' (H3K14ac). Has very low affinity for non-acetylated histone H3. Interacts (via bromo domain) with histone H4 (via N-terminus) acetylated at 'Lys-8' (H3K8ac) (in vitro). Interacts with TRIM24, PTPN13 and DVL1. Identified in a complex with SMARCA4/BRG1, SMARCC1/BAF155, SMARCE1/BAF57, DPF2/BAF45D and ARID2, subunits of the SWI/SNF-B (PBAF) chromatin remodeling complex. As to expression, ubiquitous.

It is found in the nucleus. It localises to the chromosome. Functionally, acts both as coactivator and as corepressor. May play a role in chromatin remodeling. Transcriptional corepressor that down-regulates the expression of target genes. Binds to target promoters, leading to increased histone H3 acetylation at 'Lys-9' (H3K9ac). Binds to the ESR1 promoter. Recruits BRCA1 and POU2F1 to the ESR1 promoter. Coactivator for TP53-mediated activation of transcription of a set of target genes. Required for TP53-mediated cell-cycle arrest in response to oncogene activation. Promotes acetylation of TP53 at 'Lys-382', and thereby promotes efficient recruitment of TP53 to target promoters. Inhibits cell cycle progression from G1 to S phase. Activator of the Wnt signaling pathway in a DVL1-dependent manner by negatively regulating the GSK3B phosphotransferase activity. Induces dephosphorylation of GSK3B at 'Tyr-216'. Down-regulates TRIM24-mediated activation of transcriptional activation by AR. This is Bromodomain-containing protein 7 (Brd7) from Mus musculus (Mouse).